The primary structure comprises 412 residues: Tyrosine--tRNA ligase (412 aa).

Residues Pro-48–His-57 carry the 'HIGH' region motif. A 'KMSKS' region motif is present at residues Lys-232 to Ser-236. Residue Lys-235 participates in ATP binding. The S4 RNA-binding domain maps to Val-342–Pro-405.

The protein belongs to the class-I aminoacyl-tRNA synthetase family. TyrS type 2 subfamily. As to quaternary structure, homodimer.

The protein localises to the cytoplasm. The enzyme catalyses tRNA(Tyr) + L-tyrosine + ATP = L-tyrosyl-tRNA(Tyr) + AMP + diphosphate + H(+). Catalyzes the attachment of tyrosine to tRNA(Tyr) in a two-step reaction: tyrosine is first activated by ATP to form Tyr-AMP and then transferred to the acceptor end of tRNA(Tyr). The protein is Tyrosine--tRNA ligase of Salinibacter ruber (strain DSM 13855 / M31).